Here is a 507-residue protein sequence, read N- to C-terminus: tRNA (guanine(6)-N(2))-methyltransferase THUMP3 (507 aa).

Residues 165-285 (KIDQRNVKKE…DNEVIVGIAL (121 aa)) form the THUMP domain.

This sequence belongs to the methyltransferase superfamily. As to quaternary structure, part of the heterodimeric THUMPD3-TRM112 methyltransferase complex; this complex forms an active tRNA methyltransferase, where TRMT112 acts as an activator of the catalytic subunit THUMPD3.

Its subcellular location is the cytoplasm. It catalyses the reaction guanosine(6) in tRNA + S-adenosyl-L-methionine = N(2)-methylguanosine(6) in tRNA + S-adenosyl-L-homocysteine + H(+). The enzyme catalyses guanosine(7) in tRNA + S-adenosyl-L-methionine = N(2)-methylguanosine(7) in tRNA + S-adenosyl-L-homocysteine + H(+). Its function is as follows. Catalytic subunit of the THUMPD3-TRM112 methyltransferase complex, that specifically mediates the S-adenosyl-L-methionine-dependent N(2)-methylation of guanosine nucleotide at position 6 (m2G6) in tRNAs. This is one of the major tRNA (guanine-N(2))-methyltransferases. Also catalyzes the S-adenosyl-L-methionine-dependent N(2)-methylation of guanosine nucleotide at position 7 of tRNA(Trp). The sequence is that of tRNA (guanine(6)-N(2))-methyltransferase THUMP3 from Homo sapiens (Human).